The following is a 197-amino-acid chain: uncharacterized protein (197 aa).

The first 23 residues, 1 to 23 (MSARAPKELRLALPPCLLNRTFA), serve as a signal peptide directing secretion. The Extracellular segment spans residues 24–61 (SPNASGSGNTGARGPGAVGSGTCITQVGQQLFQSFSST). Asparagine 26 is a glycosylation site (N-linked (GlcNAc...) asparagine). Residues 62–82 (LVLIVLVTLIFCLIVLSLSTF) form a helical membrane-spanning segment. Residues 83–197 (HIHKRRMKKR…EGLLQTVVLS (115 aa)) are Cytoplasmic-facing. A disordered region spans residues 94-180 (MQRAQEEYER…SSPQGAHAAS (87 aa)). 2 stretches are compositionally biased toward basic and acidic residues: residues 96 to 107 (RAQEEYERDHCS) and 125 to 136 (HAKETRLERQPR). Low complexity predominate over residues 141 to 161 (CAPSNASSLSSSSPGLPCQGP). The segment covering 162–171 (CAPPPPPPAS) has biased composition (pro residues).

The protein resides in the membrane. This is an uncharacterized protein from Homo sapiens (Human).